A 535-amino-acid chain; its full sequence is uncharacterized protein (535 aa).

6 disordered regions span residues 1–58, 211–254, 313–353, 376–416, 421–440, and 508–535; these read MSMK…PRGP, EPPK…PPCI, RRVA…EQVK, RPDK…DQRL, QGLDSGAMDDDTYNPYDAAW, and SLFEHTKEKKRGGDGGDSRGESKRSRRD. Basic and acidic residues predominate over residues 22–34; it reads IRRDPWFGGRDNE. The SNW stretch occupies residues 179 to 342; it reads AQYIRYTPSQ…KARQERSAMR (164 aa). A compositionally biased stretch (basic and acidic residues) spans 376–393; sequence RPDKADKLRKERERDISE. Over residues 511–535 the composition is skewed to basic and acidic residues; that stretch reads EHTKEKKRGGDGGDSRGESKRSRRD.

This sequence belongs to the SNW family.

This is an uncharacterized protein from Caenorhabditis elegans.